We begin with the raw amino-acid sequence, 600 residues long: Prostaglandin G/H synthase 1 (600 aa).

The signal sequence occupies residues 1–24 (MSRQGISLRFPLLLLLLSPSPVLP). An EGF-like domain is found at 32-70 (PVNPCCYYPCQHQGICVRFGLDRYQCDCTRTGYYGPNCT). 4 disulfide bridges follow: Cys36/Cys47, Cys37/Cys159, Cys41/Cys57, and Cys59/Cys69. N-linked (GlcNAc...) asparagine glycosylation is found at Asn68, Asn104, and Asn144. Catalysis depends on His207, which acts as the Proton acceptor. Tyr385 functions as the For cyclooxygenase activity in the catalytic mechanism. Residue His388 participates in heme b binding. Asn410 is a glycosylation site (N-linked (GlcNAc...) asparagine). A disulfide bond links Cys569 and Cys575.

It belongs to the prostaglandin G/H synthase family. Homodimer. Heme b is required as a cofactor.

The protein resides in the microsome membrane. It is found in the endoplasmic reticulum membrane. The catalysed reaction is (5Z,8Z,11Z,14Z)-eicosatetraenoate + AH2 + 2 O2 = prostaglandin H2 + A + H2O. It carries out the reaction (5Z,8Z,11Z,14Z)-eicosatetraenoate + 2 O2 = prostaglandin G2. It catalyses the reaction prostaglandin G2 + AH2 = prostaglandin H2 + A + H2O. The enzyme catalyses (9Z,12Z)-octadecadienoate + AH2 + O2 = (9R)-hydroxy-(10E,12Z)-octadecadienoate + A + H2O. The catalysed reaction is (9Z,12Z)-octadecadienoate + AH2 + O2 = (9S)-hydroxy-(10E,12Z)-octadecadienoate + A + H2O. It carries out the reaction (9Z,12Z)-octadecadienoate + AH2 + O2 = (13S)-hydroxy-(9Z,11E)-octadecadienoate + A + H2O. It catalyses the reaction (9Z,12Z)-octadecadienoate + AH2 + O2 = (13R)-hydroxy-(9Z,11E)-octadecadienoate + A + H2O. It participates in lipid metabolism; prostaglandin biosynthesis. The cyclooxygenase activity is inhibited by nonsteroidal anti-inflammatory drugs (NSAIDs) including ibuprofen, flurbiprofen, ketoprofen, naproxen, flurbiprofen, anirolac, fenclofenac and diclofenac. Its function is as follows. Dual cyclooxygenase and peroxidase that plays an important role in the biosynthesis pathway of prostanoids, a class of C20 oxylipins mainly derived from arachidonate ((5Z,8Z,11Z,14Z)-eicosatetraenoate, AA, C20:4(n-6)), with a particular role in the inflammatory response. The cyclooxygenase activity oxygenates AA to the hydroperoxy endoperoxide prostaglandin G2 (PGG2), and the peroxidase activity reduces PGG2 to the hydroxy endoperoxide prostaglandin H2 (PGH2), the precursor of all 2-series prostaglandins and thromboxanes. This complex transformation is initiated by abstraction of hydrogen at carbon 13 (with S-stereochemistry), followed by insertion of molecular O2 to form the endoperoxide bridge between carbon 9 and 11 that defines prostaglandins. The insertion of a second molecule of O2 (bis-oxygenase activity) yields a hydroperoxy group in PGG2 that is then reduced to PGH2 by two electrons. Involved in the constitutive production of prostanoids in particular in the stomach and platelets. In gastric epithelial cells, it is a key step in the generation of prostaglandins, such as prostaglandin E2 (PGE2), which plays an important role in cytoprotection. In platelets, it is involved in the generation of thromboxane A2 (TXA2), which promotes platelet activation and aggregation, vasoconstriction and proliferation of vascular smooth muscle cells. Can also use linoleate (LA, (9Z,12Z)-octadecadienoate, C18:2(n-6)) as substrate and produce hydroxyoctadecadienoates (HODEs) in a regio- and stereospecific manner, being (9R)-HODE ((9R)-hydroxy-(10E,12Z)-octadecadienoate) and (13S)-HODE ((13S)-hydroxy-(9Z,11E)-octadecadienoate) its major products. This is Prostaglandin G/H synthase 1 (PTGS1) from Bos taurus (Bovine).